A 153-amino-acid chain; its full sequence is Small ribosomal subunit protein uS13 (153 aa).

It belongs to the universal ribosomal protein uS13 family. Part of the 30S ribosomal subunit. Forms a loose heterodimer with protein S19. Forms two bridges to the 50S subunit in the 70S ribosome.

In terms of biological role, located at the top of the head of the 30S subunit, it contacts several helices of the 16S rRNA. In the 70S ribosome it contacts the 23S rRNA (bridge B1a) and protein L5 of the 50S subunit (bridge B1b), connecting the 2 subunits; these bridges are implicated in subunit movement. In Pyrobaculum islandicum (strain DSM 4184 / JCM 9189 / GEO3), this protein is Small ribosomal subunit protein uS13.